The chain runs to 2053 residues: Cell adhesion molecule DSCAML1 (2053 aa).

Residues 1–18 form the signal peptide; sequence MWLVTFLLLLDSLHKARP. Ig-like C2-type domains lie at 19–119, 115–217, 226–306, 314–402, 408–501, 506–586, 596–685, 690–784, and 788–885; these read EDVG…NIRV, PNIR…ARLS, PTIL…AEAT, PLHV…AIIA, PRIV…ARIN, PSIR…LSIS, PPLI…RQLI, PRFV…MFLT, and PAMI…LTVQ. Over 19-1591 the chain is Extracellular; it reads EDVGTSLYFV…AQGEGDDVKK (1573 aa). N-linked (GlcNAc...) asparagine glycosylation is found at Asn29 and Asn79. Disulfide bonds link Cys47–Cys103, Cys146–Cys198, Cys247–Cys294, Cys336–Cys386, and Cys429–Cys485. N-linked (GlcNAc...) asparagine glycans are attached at residues Asn368, Asn471, Asn513, Asn556, Asn666, Asn710, Asn749, Asn796, and Asn809. 2 cysteine pairs are disulfide-bonded: Cys526–Cys575 and Cys617–Cys669. Cys711 and Cys767 are joined by a disulfide. A disulfide bridge links Cys810 with Cys867. Fibronectin type-III domains follow at residues 887–984, 989–1088, 1093–1189, and 1193–1288; these read PPDP…TEEA, PPMD…TLED, PPEN…TKED, and PPAG…AGKA. N-linked (GlcNAc...) asparagine glycosylation is found at Asn926, Asn1082, Asn1144, Asn1162, Asn1275, and Asn1345. Residues 1278-1377 form the Ig-like C2-type 10 domain; the sequence is EKVTIEPAGK…TGGFDTIIVN (100 aa). Cys1311 and Cys1363 are disulfide-bonded. Fibronectin type-III domains follow at residues 1383–1477 and 1478–1578; these read PPDQ…THGR and EPSF…TIPP. N-linked (GlcNAc...) asparagine glycans are attached at residues Asn1492, Asn1531, and Asn1561. A helical membrane pass occupies residues 1592–1612; the sequence is LFTIGCPVILATLGVALLFIV. At 1613 to 2053 the chain is on the cytoplasmic side; that stretch reads RKKRKEKRLK…GAYSKSYTLV (441 aa). 4 disordered regions span residues 1715 to 1741, 1773 to 1803, 1840 to 1862, and 1974 to 2053; these read PLIDMSDIRPGTNPVSRKNVKSAHSTR, HGVTVTESDSYSASLSQDTDKGRNSMVSTES, SSDQMTTGTNENADSMTSMSTPS, and LAMP…YTLV. Residues 1732 to 1741 are compositionally biased toward basic residues; the sequence is KNVKSAHSTR. Over residues 1773–1789 the composition is skewed to polar residues; it reads HGVTVTESDSYSASLSQ. Residues 1977-2009 show a composition bias toward pro residues; sequence PAPPAGTAPPAPGPTPAEPPTAPSAAPPAPSTE. Positions 2029-2041 are enriched in polar residues; it reads EMSTSGVGRSQKQ.

Homodimer; mediates homophilic interactions to promote cell adhesion. In terms of tissue distribution, detected in heart, liver, pancreas, skeletal muscle, kidney and in brain, in particular in the amygdala, caudate nucleus, corpus callosum, hippocampus, substantia nigra, thalamus and subthalamus.

The protein resides in the cell membrane. It is found in the synapse. In terms of biological role, cell adhesion molecule that plays a role in neuronal self-avoidance. Promotes repulsion between specific neuronal processes of either the same cell or the same subtype of cells. Promotes both isoneuronal self-avoidance for creating an orderly neurite arborization in retinal rod bipolar cells and heteroneuronal self-avoidance to maintain mosaic spacing between AII amacrine cells. Adhesion molecule that promotes lamina-specific synaptic connections in the retina: expressed in specific subsets of interneurons and retinal ganglion cells (RGCs) and promotes synaptic connectivity via homophilic interactions. The protein is Cell adhesion molecule DSCAML1 (DSCAML1) of Homo sapiens (Human).